The chain runs to 891 residues: Mating-type protein A-alpha Z3 (891 aa).

Residues 111–189 (EWQENMPPVP…AARIRIGWTH (79 aa)) constitute a DNA-binding region (homeobox; TALE-type). The span at 331 to 360 (AAHEKRQQARREQRQAKNERDAAQMREEQR) shows a compositional bias: basic and acidic residues. Disordered regions lie at residues 331–592 (AAHE…VNWD), 606–671 (YLDS…ASET), 779–812 (SILS…VEPS), and 836–861 (PKKD…SPDT). Acidic residues-rich tracts occupy residues 369-400 (SSDD…SDSD) and 427-457 (ADDE…EEDT). Composition is skewed to low complexity over residues 542-559 (PSKT…KSST) and 612-650 (SSRP…SSVS). Over residues 651 to 660 (TCETVGTDSS) the composition is skewed to polar residues. Residues 841-850 (RYAERAERRA) show a composition bias toward basic and acidic residues.

This sequence belongs to the TALE/M-ATYP homeobox family.

It is found in the nucleus. Specifies A-alpha-3 mating-type. May regulate the expression of genes specific to the homokaryotic cell type. This chain is Mating-type protein A-alpha Z3, found in Schizophyllum commune (Split gill fungus).